Reading from the N-terminus, the 185-residue chain is Serine/arginine-rich splicing factor RSZ21 (185 aa).

Residues 2–73 (ARLYVGNLDP…WRVELSRNSS (72 aa)) form the RRM domain. Residues 86–103 (MKCYECGETGHFARECRL) form a CCHC-type zinc finger. Residues 104 to 185 (RIGPGGLGSG…DGGRYRRSRS (82 aa)) are disordered. Basic residues predominate over residues 113-123 (GKRRSRSRSRS). Composition is skewed to low complexity over residues 124 to 138 (RSPQ…GRRS) and 151 to 162 (VSPVRGRSYSRS).

Belongs to the splicing factor SR family. In terms of processing, extensively phosphorylated on serine residues in the RS domain. As to expression, expressed in roots, leaves and immature seeds.

The protein resides in the nucleus. Functionally, involved in pre-mRNA splicing. In Oryza sativa subsp. japonica (Rice), this protein is Serine/arginine-rich splicing factor RSZ21 (RSZP21).